A 1342-amino-acid polypeptide reads, in one-letter code: DNA-directed RNA polymerase subunit beta (1342 aa).

This sequence belongs to the RNA polymerase beta chain family. The RNAP catalytic core consists of 2 alpha, 1 beta, 1 beta' and 1 omega subunit. When a sigma factor is associated with the core the holoenzyme is formed, which can initiate transcription.

It carries out the reaction RNA(n) + a ribonucleoside 5'-triphosphate = RNA(n+1) + diphosphate. Its function is as follows. DNA-dependent RNA polymerase catalyzes the transcription of DNA into RNA using the four ribonucleoside triphosphates as substrates. In Buchnera aphidicola subsp. Acyrthosiphon pisum (strain Tuc7), this protein is DNA-directed RNA polymerase subunit beta.